The following is a 345-amino-acid chain: Dihydroorotate dehydrogenase (quinone) (345 aa).

FMN is bound by residues 65 to 69 (AGLDK) and Thr-89. Lys-69 contributes to the substrate binding site. Position 114 to 118 (114 to 118 (NRMGF)) interacts with substrate. Residues Asn-142 and Asn-175 each coordinate FMN. Residue Asn-175 coordinates substrate. The Nucleophile role is filled by Ser-178. Asn-180 provides a ligand contact to substrate. FMN is bound by residues Lys-220 and Thr-248. Position 249–250 (249–250 (NT)) interacts with substrate. Residues Gly-271, Gly-300, and 321-322 (YT) each bind FMN.

It belongs to the dihydroorotate dehydrogenase family. Type 2 subfamily. Monomer. FMN is required as a cofactor.

It localises to the cell membrane. The enzyme catalyses (S)-dihydroorotate + a quinone = orotate + a quinol. It participates in pyrimidine metabolism; UMP biosynthesis via de novo pathway; orotate from (S)-dihydroorotate (quinone route): step 1/1. Functionally, catalyzes the conversion of dihydroorotate to orotate with quinone as electron acceptor. The sequence is that of Dihydroorotate dehydrogenase (quinone) from Burkholderia multivorans (strain ATCC 17616 / 249).